We begin with the raw amino-acid sequence, 472 residues long: Trigger factor (472 aa).

Residues 172-257 (GDEVRFDFKG…IKEITSVKPQ (86 aa)) enclose the PPIase FKBP-type domain. Composition is skewed to polar residues over residues 439–449 (NQPKDTASTLS) and 461–472 (KTSNTKKVASKK). The interval 439–472 (NQPKDTASTLSKQEDKPKVAKAKTSNTKKVASKK) is disordered.

This sequence belongs to the FKBP-type PPIase family. Tig subfamily.

The protein localises to the cytoplasm. It carries out the reaction [protein]-peptidylproline (omega=180) = [protein]-peptidylproline (omega=0). In terms of biological role, involved in protein export. Acts as a chaperone by maintaining the newly synthesized protein in an open conformation. Functions as a peptidyl-prolyl cis-trans isomerase. This is Trigger factor from Ureaplasma urealyticum serovar 10 (strain ATCC 33699 / Western).